A 308-amino-acid chain; its full sequence is Methionyl-tRNA formyltransferase (308 aa).

Position 109-112 (109-112) interacts with (6S)-5,6,7,8-tetrahydrofolate; that stretch reads SLLP.

Belongs to the Fmt family.

It carries out the reaction L-methionyl-tRNA(fMet) + (6R)-10-formyltetrahydrofolate = N-formyl-L-methionyl-tRNA(fMet) + (6S)-5,6,7,8-tetrahydrofolate + H(+). Its function is as follows. Attaches a formyl group to the free amino group of methionyl-tRNA(fMet). The formyl group appears to play a dual role in the initiator identity of N-formylmethionyl-tRNA by promoting its recognition by IF2 and preventing the misappropriation of this tRNA by the elongation apparatus. In Phenylobacterium zucineum (strain HLK1), this protein is Methionyl-tRNA formyltransferase.